Reading from the N-terminus, the 468-residue chain is 6-phosphogluconate dehydrogenase, decarboxylating (468 aa).

NADP(+)-binding positions include 9–14 (GLAVMG), 32–34 (NRS), 73–75 (VKA), and N101. Residues N101 and 127–129 (SGG) contribute to the substrate site. Residue K182 is the Proton acceptor of the active site. Substrate is bound at residue 185 to 186 (HN). E189 functions as the Proton donor in the catalytic mechanism. The substrate site is built by Y190, K259, R286, R444, and H450.

This sequence belongs to the 6-phosphogluconate dehydrogenase family. In terms of assembly, homodimer.

It catalyses the reaction 6-phospho-D-gluconate + NADP(+) = D-ribulose 5-phosphate + CO2 + NADPH. Its pathway is carbohydrate degradation; pentose phosphate pathway; D-ribulose 5-phosphate from D-glucose 6-phosphate (oxidative stage): step 3/3. In terms of biological role, catalyzes the oxidative decarboxylation of 6-phosphogluconate to ribulose 5-phosphate and CO(2), with concomitant reduction of NADP to NADPH. The protein is 6-phosphogluconate dehydrogenase, decarboxylating (gnd) of Staphylococcus epidermidis (strain ATCC 35984 / DSM 28319 / BCRC 17069 / CCUG 31568 / BM 3577 / RP62A).